Consider the following 421-residue polypeptide: Synaptotagmin-12 (421 aa).

The Vesicular segment spans residues 1-18 (MAVDVAEYHLSVIKSPPG). A helical transmembrane segment spans residues 19-39 (WEVGVYAAGALALLGIAAVSL). Residues 40–421 (WKLWTSGSFP…VSMWHAVRRN (382 aa)) lie on the Cytoplasmic side of the membrane. S97, S99, and S214 each carry phosphoserine. C2 domains are found at residues 152–272 (TLGQ…SGWL) and 283–416 (AVGE…SMWH).

It belongs to the synaptotagmin family. In terms of assembly, homodimer. Can also form heterodimers. Interacts with SYT1. Post-translationally, phosphorylation of Ser-97 is required for mossy-fiber long-term potentiation.

The protein resides in the cytoplasmic vesicle. It is found in the secretory vesicle. Its subcellular location is the synaptic vesicle membrane. Synaptic vesicle phosphoprotein that enhances spontaneous neurotransmitter release but does not effect induced neurotransmitter release. Unlike other synaptotagmins, it does not bind Ca(2+) or phospholipids. Essential for mossy-fiber long-term potentiation in the hippocampus. In Homo sapiens (Human), this protein is Synaptotagmin-12 (SYT12).